Consider the following 351-residue polypeptide: Photosystem II D2 protein (351 aa).

The chain crosses the membrane as a helical span at residues 39-59 (CAYLALGAWFTGTTFVSSWYT). His-116 is a binding site for chlorophyll a. The helical transmembrane segment at 123–139 (GFCLRQFEIARLVGLRP) threads the bilayer. Residues Gln-128 and Asn-141 each contribute to the pheophytin a site. Residues 151–164 (VFVSVFLLYPLGQA) form a helical membrane-spanning segment. A chlorophyll a-binding site is contributed by His-196. The chain crosses the membrane as a helical span at residues 206 to 226 (GALLCAIHGATVENTLFEDGE). A plastoquinone-binding residues include His-213 and Phe-260. His-213 provides a ligand contact to Fe cation. His-267 is a binding site for Fe cation. Residues 277-293 (GLWVSSIGIVGLALNLR) form a helical membrane-spanning segment.

It belongs to the reaction center PufL/M/PsbA/D family. In terms of assembly, PSII is composed of 1 copy each of membrane proteins PsbA, PsbB, PsbC, PsbD, PsbE, PsbF, PsbH, PsbI, PsbJ, PsbK, PsbL, PsbM, PsbT, PsbY, PsbZ, Psb30/Ycf12, at least 3 peripheral proteins of the oxygen-evolving complex and a large number of cofactors. It forms dimeric complexes. The D1/D2 heterodimer binds P680, chlorophylls that are the primary electron donor of PSII, and subsequent electron acceptors. It shares a non-heme iron and each subunit binds pheophytin, quinone, additional chlorophylls, carotenoids and lipids. There is also a Cl(-1) ion associated with D1 and D2, which is required for oxygen evolution. The PSII complex binds additional chlorophylls, carotenoids and specific lipids. serves as cofactor.

Its subcellular location is the plastid. The protein localises to the chloroplast thylakoid membrane. It catalyses the reaction 2 a plastoquinone + 4 hnu + 2 H2O = 2 a plastoquinol + O2. Its function is as follows. Photosystem II (PSII) is a light-driven water:plastoquinone oxidoreductase that uses light energy to abstract electrons from H(2)O, generating O(2) and a proton gradient subsequently used for ATP formation. It consists of a core antenna complex that captures photons, and an electron transfer chain that converts photonic excitation into a charge separation. The D1/D2 (PsbA/PsbD) reaction center heterodimer binds P680, the primary electron donor of PSII as well as several subsequent electron acceptors. D2 is needed for assembly of a stable PSII complex. This chain is Photosystem II D2 protein, found in Cyanidium caldarium (Red alga).